A 378-amino-acid chain; its full sequence is Atypical chemokine receptor 2 (378 aa).

The Extracellular segment spans residues 1–49 (MPTVASPLPLTTVGSENSSSIYDYDYLDDMTILVCRKDEVLSFGRVFLP). An N-linked (GlcNAc...) asparagine glycan is attached at asparagine 17. The helical transmembrane segment at 50–70 (VVYSLIFVLGLAGNLLLLVVL) threads the bilayer. Over 71–91 (LHSAPRRRTMELYLLNLAVSN) the chain is Cytoplasmic. The helical transmembrane segment at 92-112 (LLFVVTMPFWAISVAWHWVFG) threads the bilayer. The Extracellular segment spans residues 113 to 117 (SFLCK). Cysteine 116 and cysteine 194 are disulfide-bonded. A helical membrane pass occupies residues 118 to 139 (VISTLYSINFYCGIFFITCMSL). Residues 140-161 (DKYLEIVHAQPLHRPKAQFRNL) are Cytoplasmic-facing. The chain crosses the membrane as a helical span at residues 162 to 182 (LLIVMVWITSLAISVPEMVFV). The Extracellular portion of the chain corresponds to 183-216 (QIHQTLDGVWHCYADFGGHATIWKLYLRFQLNLL). A helical transmembrane segment spans residues 217-237 (GFLLPLLAMIFFYSRIGCVLV). Residues 238–249 (RLRPPGQGRALR) are Cytoplasmic-facing. The chain crosses the membrane as a helical span at residues 250-270 (MAAALVIVFFMLWFPYNLTLF). Topologically, residues 271–292 (LHSLLDLHVFGNCEISHRLDYT) are extracellular. The helical transmembrane segment at 293 to 313 (LQVTESLAFSHCCFTPVLYAF) threads the bilayer. Residues 314 to 378 (CSHRFRRYLK…SLNKGEMGNT (65 aa)) are Cytoplasmic-facing. A C-terminal cytoplasmic tail region spans residues 326–378 (LSVMLRWHQAPGTPSSNHSESSRVTAQEDVVSMNDLGERQSEDSLNKGEMGNT).

Belongs to the G-protein coupled receptor 1 family. Atypical chemokine receptor subfamily. Post-translationally, phosphorylated on serine residues in the C-terminal cytoplasmic tail. As to expression, expressed on apoptotic neutrophils (at protein level).

The protein resides in the early endosome. It localises to the recycling endosome. The protein localises to the cell membrane. Functionally, atypical chemokine receptor that controls chemokine levels and localization via high-affinity chemokine binding that is uncoupled from classic ligand-driven signal transduction cascades, resulting instead in chemokine sequestration, degradation, or transcytosis. Also known as interceptor (internalizing receptor) or chemokine-scavenging receptor or chemokine decoy receptor. Acts as a receptor for chemokines including CCL2, CCL3, CCL3L1, CCL4, CCL5, CCL7, CCL8, CCL11, CCL13, CCL17, CCL22, CCL23, CCL24, SCYA2/MCP-1, SCY3/MIP-1-alpha, SCYA5/RANTES and SCYA7/MCP-3. Upon active ligand stimulation, activates a beta-arrestin 1 (ARRB1)-dependent, G protein-independent signaling pathway that results in the phosphorylation of the actin-binding protein cofilin (CFL1) through a RAC1-PAK1-LIMK1 signaling pathway. Activation of this pathway results in up-regulation of ACKR2 from endosomal compartment to cell membrane, increasing its efficiency in chemokine uptake and degradation. By scavenging chemokines in tissues, on the surfaces of lymphatic vessels, and in placenta, plays an essential role in the resolution (termination) of the inflammatory response and in the regulation of adaptive immune responses. Plays a major role in the immune silencing of macrophages during the resolution of inflammation. Acts as a regulator of inflammatory leukocyte interactions with lymphatic endothelial cells (LECs) and is required for immature/mature dendritic cells discrimination by LECs. This chain is Atypical chemokine receptor 2 (Ackr2), found in Mus musculus (Mouse).